A 1435-amino-acid polypeptide reads, in one-letter code: Nitric oxide synthase 1 (1435 aa).

The interaction with NOSIP stretch occupies residues 1–206 (MEEHVFGVQQ…LQGSGDKNEL (206 aa)). Residues 17–99 (SVRLFKRKVG…ETHVVLILRG (83 aa)) form the PDZ domain. Disordered regions lie at residues 110 to 201 (TFTG…QGSG) and 277 to 304 (NNPYSEKEQPPASGKQSPTKNGSPSKCP). Residues 164-246 (QGHGQEAGSP…TGVQVDRDFD (83 aa)) form an interaction with DYNLL1/PIN region. The segment covering 290–300 (GKQSPTKNGSP) has biased composition (polar residues). Residue S340 coordinates (6R)-L-erythro-5,6,7,8-tetrahydrobiopterin. C421 contacts heme b. Residues Q484, W593, Y594, and E598 each contribute to the L-arginine site. The (6R)-L-erythro-5,6,7,8-tetrahydrobiopterin site is built by V683, W684, and F697. Y712 serves as a coordination point for heme b. The interval 731 to 751 (KRRAIGFKKLAEAVKFSAKLM) is calmodulin-binding. One can recognise a Flavodoxin-like domain in the interval 761 to 941 (ATILYATETG…AFRTWAKKVF (181 aa)). T767, E768, T769, K771, S772, S813, T814, and G818 together coordinate FMN. Phosphoserine is present on residues S853, S863, and S864. S892, H897, C899, E925, and Q929 together coordinate FMN. Residues 996–1243 (KRVSAARLLS…VRGAPSFRLP (248 aa)) enclose the FAD-binding FR-type domain. An NADP(+)-binding site is contributed by R1016. 7 residues coordinate FAD: H1038, R1179, Y1180, Y1181, S1182, T1197, and A1199. S1202 serves as a coordination point for NADP(+). Residues Y1203, V1216, C1217, and S1218 each coordinate FAD. Residues T1257, R1290, S1319, R1320, K1326, Y1328, Q1330, D1363, T1404, and R1406 each coordinate NADP(+).

Belongs to the NOS family. As to quaternary structure, homodimer. Interacts with DLG4; the interaction possibly being prevented by the association between NOS1 and CAPON. Forms a ternary complex with CAPON and RASD1. Forms a ternary complex with CAPON and SYN1. Interacts with ZDHHC23. Interacts with NOSIP; which may impair its synaptic location. Interacts with HTR4. Interacts with SLC6A4. Interacts with VAC14. Interacts (via N-terminal domain) with DLG4 (via N-terminal tandem pair of PDZ domains). Interacts with SLC6A4. Forms a complex with ASL, ASS1 and SLC7A1; the complex regulates cell-autonomous L-arginine synthesis and citrulline recycling while channeling extracellular L-arginine to nitric oxide synthesis pathway. Interacts with DMD; localizes NOS1 to sarcolemma in muscle cells. Interacts with DYNLL1; inhibits the nitric oxide synthase activity. Heme b is required as a cofactor. It depends on FAD as a cofactor. FMN serves as cofactor. Requires (6R)-L-erythro-5,6,7,8-tetrahydrobiopterin as cofactor. In terms of processing, ubiquitinated; mediated by STUB1/CHIP in the presence of Hsp70 and Hsp40 (in vitro).

The protein localises to the cell membrane. It is found in the sarcolemma. The protein resides in the cell projection. Its subcellular location is the dendritic spine. It carries out the reaction 2 L-arginine + 3 NADPH + 4 O2 + H(+) = 2 L-citrulline + 2 nitric oxide + 3 NADP(+) + 4 H2O. With respect to regulation, stimulated by calcium/calmodulin. Inhibited by DYNLL1 that prevents the dimerization of the protein. Inhibited by NOSIP. Functionally, produces nitric oxide (NO) which is a messenger molecule with diverse functions throughout the body. In the brain and peripheral nervous system, NO displays many properties of a neurotransmitter. Probably has nitrosylase activity and mediates cysteine S-nitrosylation of cytoplasmic target proteins such SRR. This is Nitric oxide synthase 1 (NOS1) from Oryctolagus cuniculus (Rabbit).